The sequence spans 180 residues: Regulator of G-protein signaling 8 (180 aa).

Ser-26 carries the post-translational modification Phosphoserine. Residues 56-171 (SFDVLLSHKY…FLRSKMYLDL (116 aa)) enclose the RGS domain.

As to quaternary structure, interacts with GNAO1. Interacts with GNAI3.

The protein localises to the cell membrane. The protein resides in the membrane. It localises to the perikaryon. It is found in the cell projection. Its subcellular location is the dendrite. The protein localises to the nucleus. In terms of biological role, regulates G protein-coupled receptor signaling cascades, including signaling via muscarinic acetylcholine receptor CHRM2 and dopamine receptor DRD2. Inhibits signal transduction by increasing the GTPase activity of G protein alpha subunits, thereby driving them into their inactive GDP-bound form. Modulates the activity of potassium channels that are activated in response to DRD2 and CHRM2 signaling. This is Regulator of G-protein signaling 8 (RGS8) from Homo sapiens (Human).